We begin with the raw amino-acid sequence, 389 residues long: Monomeric sarcosine oxidase (389 aa).

8–38 serves as a coordination point for FAD; sequence DVIVVGAGSMGMAAGYYLSKQGVKTLLVDSF. Cys318 carries the post-translational modification S-8alpha-FAD cysteine.

Belongs to the MSOX/MTOX family. MSOX subfamily. Monomer. The cofactor is FAD.

The protein resides in the cytoplasm. The enzyme catalyses sarcosine + O2 + H2O = formaldehyde + glycine + H2O2. Its function is as follows. Catalyzes the oxidative demethylation of sarcosine. The protein is Monomeric sarcosine oxidase (soxA) of Arthrobacter sp. (strain TE1826).